A 206-amino-acid polypeptide reads, in one-letter code: LexA repressor (206 aa).

The segment at residues 28–48 (RAEIATRLGFKSANAAEEHLK) is a DNA-binding region (H-T-H motif). Residues serine 123 and lysine 160 each act as for autocatalytic cleavage activity in the active site.

This sequence belongs to the peptidase S24 family. In terms of assembly, homodimer.

The catalysed reaction is Hydrolysis of Ala-|-Gly bond in repressor LexA.. Its function is as follows. Represses a number of genes involved in the response to DNA damage (SOS response), including recA and lexA. In the presence of single-stranded DNA, RecA interacts with LexA causing an autocatalytic cleavage which disrupts the DNA-binding part of LexA, leading to derepression of the SOS regulon and eventually DNA repair. In Shewanella sp. (strain MR-7), this protein is LexA repressor.